A 603-amino-acid polypeptide reads, in one-letter code: NADH-ubiquinone oxidoreductase chain 5 (603 aa).

Transmembrane regions (helical) follow at residues 4–24, 38–58, 87–107, 114–134, 140–160, 171–191, 210–230, 241–261, 272–292, 301–320, 325–347, 370–390, 407–429, 457–477, 482–502, 537–557, and 582–602; these read YATM…TTFI, SIVA…LCLD, MMFI…SLWY, INQF…LVTA, LFIG…WWYA, AILY…WFLL, LIPL…LGLH, TPVS…FLLI, LAQT…AVCA, IVAF…IGIG, AFLH…GSII, STSL…TGFY, WALS…MILL, LTIG…PTSV, IPLY…LTAL, IPYL…DLIW, and GLIK…LLLI.

The protein belongs to the complex I subunit 5 family. As to quaternary structure, core subunit of respiratory chain NADH dehydrogenase (Complex I) which is composed of 45 different subunits.

Its subcellular location is the mitochondrion inner membrane. It carries out the reaction a ubiquinone + NADH + 5 H(+)(in) = a ubiquinol + NAD(+) + 4 H(+)(out). Core subunit of the mitochondrial membrane respiratory chain NADH dehydrogenase (Complex I) which catalyzes electron transfer from NADH through the respiratory chain, using ubiquinone as an electron acceptor. Essential for the catalytic activity and assembly of complex I. The polypeptide is NADH-ubiquinone oxidoreductase chain 5 (MT-ND5) (Gorilla gorilla gorilla (Western lowland gorilla)).